Reading from the N-terminus, the 662-residue chain is Probable quinol oxidase subunit 1 (662 aa).

The next 2 membrane-spanning stretches (helical) occupy residues 14 to 34 (WMIT…IAVI) and 58 to 78 (LMYL…ALLL). Histidine 102 provides a ligand contact to Fe(II)-heme a. The next 8 helical transmembrane spans lie at 103–123 (GVIM…NVVV), 140–160 (ISFW…IIGG), 187–207 (VAIQ…FVTI), 228–248 (FITT…LALM), 273–293 (FFWV…FGIY), 311–331 (MVWA…HHFF), 336–356 (GALI…PTGV), and 376–396 (MLFS…GVML). 4 residues coordinate Cu cation: histidine 279, tyrosine 283, histidine 328, and histidine 329. A cross-link (1'-histidyl-3'-tyrosine (His-Tyr)) is located at residues 279–283 (HPEVY). Histidine 414 serves as a coordination point for heme a3. Transmembrane regions (helical) follow at residues 415–435 (FHYT…IFWY), 451–471 (CFWL…ILGL), 492–512 (VIST…VVSI), 586–605 (THTG…FLIF), and 609–628 (IPAA…QSFV). Histidine 416 provides a ligand contact to Fe(II)-heme a.

It belongs to the heme-copper respiratory oxidase family. The cofactor is Cu cation. Ferriheme a is required as a cofactor. Heme A3. serves as cofactor.

The protein localises to the cell membrane. The catalysed reaction is 2 a quinol + O2 = 2 a quinone + 2 H2O. Its pathway is energy metabolism; oxidative phosphorylation. Functionally, catalyzes quinol oxidation with the concomitant reduction of oxygen to water. This is Probable quinol oxidase subunit 1 (qoxB) from Staphylococcus haemolyticus (strain JCSC1435).